Here is a 270-residue protein sequence, read N- to C-terminus: Glutamate 5-kinase (270 aa).

Lysine 17 is a binding site for ATP. Substrate-binding residues include serine 57, aspartate 144, and asparagine 160. Residues 180-181 and 222-228 each bind ATP; these read SD and TGGMTSK.

This sequence belongs to the glutamate 5-kinase family.

Its subcellular location is the cytoplasm. The enzyme catalyses L-glutamate + ATP = L-glutamyl 5-phosphate + ADP. It participates in amino-acid biosynthesis; L-proline biosynthesis; L-glutamate 5-semialdehyde from L-glutamate: step 1/2. Catalyzes the transfer of a phosphate group to glutamate to form L-glutamate 5-phosphate. In Lactococcus lactis subsp. lactis (strain IL1403) (Streptococcus lactis), this protein is Glutamate 5-kinase.